The chain runs to 231 residues: 7-cyano-7-deazaguanine synthase (231 aa).

8–18 (FSGGQDSTTCL) serves as a coordination point for ATP. Zn(2+) contacts are provided by C188, C197, C200, and C203.

It belongs to the QueC family. Zn(2+) serves as cofactor.

The enzyme catalyses 7-carboxy-7-deazaguanine + NH4(+) + ATP = 7-cyano-7-deazaguanine + ADP + phosphate + H2O + H(+). It functions in the pathway purine metabolism; 7-cyano-7-deazaguanine biosynthesis. Catalyzes the ATP-dependent conversion of 7-carboxy-7-deazaguanine (CDG) to 7-cyano-7-deazaguanine (preQ(0)). This is 7-cyano-7-deazaguanine synthase from Escherichia coli O1:K1 / APEC.